The chain runs to 220 residues: Elongation factor Ts (220 aa).

Residues 83–86 are involved in Mg(2+) ion dislocation from EF-Tu; sequence TDFV.

It belongs to the EF-Ts family.

It localises to the cytoplasm. Functionally, associates with the EF-Tu.GDP complex and induces the exchange of GDP to GTP. It remains bound to the aminoacyl-tRNA.EF-Tu.GTP complex up to the GTP hydrolysis stage on the ribosome. The chain is Elongation factor Ts from Synechococcus sp. (strain CC9605).